A 330-amino-acid chain; its full sequence is Protein qutG (330 aa).

The Mg(2+) site is built by Glu-78, Asp-100, Leu-102, Asp-103, and Asp-251. Glu-78 provides a ligand contact to substrate. Substrate contacts are provided by residues 102–105 and Asp-251; that span reads LDGT.

The protein belongs to the inositol monophosphatase superfamily.

Its function is as follows. Not known. Probably involved in quinate metabolism. This is Protein qutG (qutG) from Emericella nidulans (strain FGSC A4 / ATCC 38163 / CBS 112.46 / NRRL 194 / M139) (Aspergillus nidulans).